The primary structure comprises 233 residues: Protein DOUBLE-STRAND BREAK FORMATION (233 aa).

Interacts with PRD1; this interaction facilitates a binding to PRD3. Specifically expressed in buds.

In terms of biological role, required for meiotic double-strand break (DSB) formation, the initial event for meiotic recombination. This Arabidopsis thaliana (Mouse-ear cress) protein is Protein DOUBLE-STRAND BREAK FORMATION.